We begin with the raw amino-acid sequence, 430 residues long: Adenylosuccinate synthetase (430 aa).

GTP-binding positions include 12 to 18 (GDEGKGK) and 40 to 42 (GHT). D13 (proton acceptor) is an active-site residue. Residues D13 and G40 each coordinate Mg(2+). Residues 13–16 (DEGK), 38–41 (NAGH), T128, R142, Q223, T238, and R302 each bind IMP. Residue H41 is the Proton donor of the active site. Residue 298-304 (TTTGRPR) coordinates substrate. GTP contacts are provided by residues R304, 330–332 (SID), and 412–414 (SVG).

The protein belongs to the adenylosuccinate synthetase family. In terms of assembly, homodimer. It depends on Mg(2+) as a cofactor.

It localises to the cytoplasm. It catalyses the reaction IMP + L-aspartate + GTP = N(6)-(1,2-dicarboxyethyl)-AMP + GDP + phosphate + 2 H(+). It participates in purine metabolism; AMP biosynthesis via de novo pathway; AMP from IMP: step 1/2. In terms of biological role, plays an important role in the de novo pathway of purine nucleotide biosynthesis. Catalyzes the first committed step in the biosynthesis of AMP from IMP. The protein is Adenylosuccinate synthetase of Streptococcus gordonii (strain Challis / ATCC 35105 / BCRC 15272 / CH1 / DL1 / V288).